The chain runs to 126 residues: Arginine decarboxylase proenzyme (126 aa).

Ser74 (schiff-base intermediate with substrate; via pyruvic acid) is an active-site residue. Position 74 is a pyruvic acid (Ser); by autocatalysis (Ser74). His79 serves as the catalytic Proton acceptor; for processing activity. Cys94 acts as the Proton donor; for catalytic activity in catalysis.

Belongs to the prokaryotic AdoMetDC family. Type 1 subfamily. As to quaternary structure, heterooctamer of four alpha and four beta chains arranged as a tetramer of alpha/beta heterodimers. Pyruvate serves as cofactor. Post-translationally, is synthesized initially as an inactive proenzyme. Formation of the active enzyme involves a self-maturation process in which the active site pyruvoyl group is generated from an internal serine residue via an autocatalytic post-translational modification. Two non-identical subunits are generated from the proenzyme in this reaction, and the pyruvate is formed at the N-terminus of the alpha chain, which is derived from the carboxyl end of the proenzyme. The post-translation cleavage follows an unusual pathway, termed non-hydrolytic serinolysis, in which the side chain hydroxyl group of the serine supplies its oxygen atom to form the C-terminus of the beta chain, while the remainder of the serine residue undergoes an oxidative deamination to produce ammonia and the pyruvoyl group blocking the N-terminus of the alpha chain.

It catalyses the reaction L-arginine + H(+) = agmatine + CO2. The protein operates within amine and polyamine biosynthesis; agmatine biosynthesis; agmatine from L-arginine: step 1/1. Specifically catalyzes the decarboxylation of L-arginine to agmatine. Has no S-adenosylmethionine decarboxylase (AdoMetDC) activity. In Pyrobaculum neutrophilum (strain DSM 2338 / JCM 9278 / NBRC 100436 / V24Sta) (Thermoproteus neutrophilus), this protein is Arginine decarboxylase proenzyme.